The chain runs to 608 residues: ESX-3 secretion system protein EccA3 (608 aa).

The tract at residues 284 to 303 (EARSDPWDPETEPSEAEFVD) is disordered. Acidic residues predominate over residues 290–301 (WDPETEPSEAEF). 365–372 (GPPGTGKT) contacts ATP.

The protein belongs to the CbxX/CfxQ family. In terms of assembly, part of the ESX-3 / type VII secretion system (T7SS), which is composed of cytosolic and membrane components.

The protein localises to the cytoplasm. Functionally, part of the ESX-3 specialized secretion system, which is required for siderophore-mediated iron acquisition and for the secretion of EsxH and EsxG. EccA3 exhibits ATPase activity and may provide energy for the export of ESX-3 substrates. The chain is ESX-3 secretion system protein EccA3 from Mycolicibacterium smegmatis (strain ATCC 700084 / mc(2)155) (Mycobacterium smegmatis).